A 248-amino-acid polypeptide reads, in one-letter code: Large ribosomal subunit protein uL4 (248 aa).

The segment at Pro-45–Lys-105 is disordered. Residues Pro-92–Lys-105 are compositionally biased toward basic and acidic residues.

Belongs to the universal ribosomal protein uL4 family. In terms of assembly, part of the 50S ribosomal subunit.

In terms of biological role, one of the primary rRNA binding proteins, this protein initially binds near the 5'-end of the 23S rRNA. It is important during the early stages of 50S assembly. It makes multiple contacts with different domains of the 23S rRNA in the assembled 50S subunit and ribosome. Functionally, forms part of the polypeptide exit tunnel. The protein is Large ribosomal subunit protein uL4 of Haloquadratum walsbyi (strain DSM 16790 / HBSQ001).